A 3646-amino-acid polypeptide reads, in one-letter code: Platelet adherence protein A (3646 aa).

Residues Met-1–Ala-33 form the signal peptide. The does not bind platelets stretch occupies residues Asp-34–Gln-359. Residues Asp-34–Asp-690 form an F2, binds platelets, fibronectin, vitronectin, salivary pellicle, causes ADP secretion by dense granules region. Positions Asp-34 to Glu-1328 are binds platelets. The region spanning Asp-75–Val-373 is the VWFA domain. The short motif at Asn-214–Arg-216 is the Integrin-like recognition motif NGR element. The Integrin-like recognition motif RGT signature appears at Arg-416–Thr-418. The disordered stretch occupies residues Lys-439–Asn-466. The segment covering Asp-445–Glu-454 has biased composition (basic and acidic residues). Residues Ala-485–Asp-487 carry the Integrin-like recognition motif AGD motif. Residues Thr-709–Phe-3205 are central region with RrgB repeats. 2 stretches are compositionally biased toward basic and acidic residues: residues Lys-1124–Thr-1135 and Asp-1563–Asn-1573. Disordered regions lie at residues Lys-1124 to Asn-1153, Asp-1563 to Lys-1589, Phe-2011 to Leu-2036, Glu-2170 to Ala-2198, Lys-2320 to Glu-2343, Pro-2467 to Lys-2492, Ala-2611 to Lys-2644, Phe-2767 to Leu-2792, Pro-2916 to Pro-2948, Thr-3202 to Thr-3252, Ala-3371 to Glu-3412, and Asn-3550 to Gly-3618. The span at Phe-2011–Lys-2022 shows a compositional bias: polar residues. Polar residues predominate over residues Phe-2767 to Lys-2778. Residues Gly-3210 to Val-3220 show a composition bias toward polar residues. Residues Arg-3223–Glu-3237 show a composition bias toward basic and acidic residues. 2 coiled-coil regions span residues Ile-3326–Lys-3376 and Val-3408–Lys-3475. Over residues Ala-3371 to Ala-3406 the composition is skewed to low complexity. The span at Asn-3550–Asn-3560 shows a compositional bias: polar residues. Positions Pro-3563–Pro-3605 are enriched in pro residues. Residues Leu-3614–Gly-3618 carry the LPXTG sorting signal motif. Thr-3617 is subject to Pentaglycyl murein peptidoglycan amidated threonine. The propeptide at Gly-3618–His-3646 is removed by sortase.

The protein resides in the secreted. The protein localises to the cell wall. Its activity is regulated as follows. Whole bacterial adhesion to Chinese hamster ovary cells expressing GPIIbIIIa is abrogated by integrin inhibitor RGDS and GPIIbIIIa inhibitor Abciximab. Its function is as follows. A cell wall protein involved with Hsa in host cell interactions required for colonization and pathogenesis. Involved in recognition of platelets. Interacts with human platelet integrin receptor GPIIbIIIa (a complex of ITGA2B and ITGB3). Involved in platelet spreading, presumably by activation of outside-in signaling leading to platelet activation and then spreading. Spreading also involves GPIIbIIIa. Binding to platelets under static conditions causes platelet dense granules to secrete ADP (similar to release induced by fibrinogen binding), has no effect on platelet alpha granule release. The N-terminal 656 aa residue fragment (called F2) also binds platelets, causes dense granule secretion and allows platelet spreading. Acts in concert with Hsa to promote binding to human fibronectin (FN1) and vitronectin (VTN), and biofilm formation. F2 bind activated platelets more strongly than unactivated platelets. Binding to both FN1 and VTN is mediated at least in part by their glycosylation. This chain is Platelet adherence protein A, found in Streptococcus gordonii (strain Challis / ATCC 35105 / BCRC 15272 / CH1 / DL1 / V288).